The sequence spans 364 residues: Small ribosomal subunit biogenesis GTPase RsgA (364 aa).

The CP-type G domain occupies 101 to 264 (KGLVEKPGVP…VIDTPGLREL (164 aa)). GTP contacts are provided by residues 154–157 (NKSD) and 206–214 (GSSGAGKST). C288, C293, H295, and C301 together coordinate Zn(2+). The disordered stretch occupies residues 339–364 (QVAQKRKRKTIPRQGKRWRREHGDGQ). Basic residues predominate over residues 342–358 (QKRKRKTIPRQGKRWRR).

The protein belongs to the TRAFAC class YlqF/YawG GTPase family. RsgA subfamily. As to quaternary structure, monomer. Associates with 30S ribosomal subunit, binds 16S rRNA. Zn(2+) is required as a cofactor.

Its subcellular location is the cytoplasm. Functionally, one of several proteins that assist in the late maturation steps of the functional core of the 30S ribosomal subunit. Helps release RbfA from mature subunits. May play a role in the assembly of ribosomal proteins into the subunit. Circularly permuted GTPase that catalyzes slow GTP hydrolysis, GTPase activity is stimulated by the 30S ribosomal subunit. The chain is Small ribosomal subunit biogenesis GTPase RsgA from Syntrophotalea carbinolica (strain DSM 2380 / NBRC 103641 / GraBd1) (Pelobacter carbinolicus).